Consider the following 580-residue polypeptide: Protein O-linked-mannose beta-1,4-N-acetylglucosaminyltransferase 2 (580 aa).

Over 1–4 the chain is Cytoplasmic; the sequence is MHLS. A helical; Signal-anchor for type II membrane protein transmembrane segment spans residues 5-25; it reads AVLNALLVSVLAAVLWKHVRL. Residues 26 to 580 are Lumenal-facing; sequence REHAASLEEE…PFADVLVCST (555 aa). Residues asparagine 99 and asparagine 276 are each glycosylated (N-linked (GlcNAc...) asparagine). The region spanning 488 to 580 is the Fibronectin type-III domain; sequence ARCQASVQGA…PFADVLVCST (93 aa).

The protein belongs to the glycosyltransferase 61 family.

The protein resides in the endoplasmic reticulum membrane. The enzyme catalyses 3-O-(alpha-D-mannosyl)-L-threonyl-[protein] + UDP-N-acetyl-alpha-D-glucosamine = 3-O-(N-acetyl-beta-D-glucosaminyl-(1-&gt;4)-alpha-D-mannosyl)-L-threonyl-[protein] + UDP + H(+). It functions in the pathway protein modification; protein glycosylation. Its function is as follows. O-linked mannose beta-1,4-N-acetylglucosaminyltransferase that transfers UDP-N-acetyl-D-glucosamine to the 4-position of the mannose to generate N-acetyl-D-glucosamine-beta-1,4-O-D-mannosylprotein. Involved in the biosynthesis of the phosphorylated O-mannosyl trisaccharide (N-acetylgalactosamine-beta-3-N-acetylglucosamine-beta-4-(phosphate-6-)mannose), a carbohydrate structure present in alpha-dystroglycan (DAG1), which is required for binding laminin G-like domain-containing extracellular proteins with high affinity. The chain is Protein O-linked-mannose beta-1,4-N-acetylglucosaminyltransferase 2 (POMGNT2) from Bos taurus (Bovine).